The following is an 862-amino-acid chain: C-type lectin domain-containing protein 161 (862 aa).

Positions 1-20 (MYRRTTLWFLLLFQPILVFA) are cleaved as a signal peptide. 2 N-linked (GlcNAc...) asparagine glycosylation sites follow: Asn22 and Asn91. Positions 41-154 (SLNACFKLYN…VGQKLPFVCT (114 aa)) constitute a C-type lectin 1 domain. A disulfide bond links Cys62 and Cys153. Residues 162–291 (AGPAPVHAMR…SDESSDEAYD (130 aa)) are disordered. A compositionally biased stretch (basic and acidic residues) spans 198 to 218 (SDKKEKKEVASDKKKESKKDE). Asn222 carries an N-linked (GlcNAc...) asparagine glycan. Residues 242 to 252 (SDKKESSKKDE) are compositionally biased toward basic and acidic residues. N-linked (GlcNAc...) asparagine glycosylation is found at Asn258, Asn279, and Asn352. A compositionally biased stretch (low complexity) spans 265-283 (ANAEMSASISASSANSSSD). Disordered regions lie at residues 377–437 (MTMR…SASL), 450–469 (ALASKSKSDSSDQSKDQKSA), and 474–504 (AVVSENKHPTKKPEDPKSTKTTTEEPDIDES). Residues 388 to 418 (SSSNTDSESASISESSQASEQAVMAAAMSAK) show a composition bias toward low complexity. Basic and acidic residues-rich tracts occupy residues 455 to 467 (SKSDSSDQSKDQK) and 478 to 491 (ENKHPTKKPEDPKS). The N-linked (GlcNAc...) asparagine glycan is linked to Asn559. 2 C-type lectin domains span residues 562–687 (APAL…SVLC) and 716–828 (KNGK…FVSV). A disulfide bond links Cys653 and Cys678. Asn765 carries N-linked (GlcNAc...) asparagine glycosylation. Cysteines 807 and 819 form a disulfide. Residues Asn831 and Asn857 are each glycosylated (N-linked (GlcNAc...) asparagine).

It is found in the secreted. In Caenorhabditis elegans, this protein is C-type lectin domain-containing protein 161 (clec-161).